The chain runs to 166 residues: MAKRRAAEPLTFRVPWKRLLLSDFPEEPPLWVPPSGAARPLKRQGDAGTMAEPASAPRKRRGGGDDEPELQGRGLEPGEPPPGEQGEPQVSRAAGGGDRVESAGSPQGADEVHSQHNEDFWQYNTFQYWRNPLPPIDLAALEDVSANSLTETLEDKNEGVEIDMES.

The segment at 25–116 is disordered; the sequence is PEEPPLWVPP…QGADEVHSQH (92 aa). Serine 105 is subject to Phosphoserine.

This is an uncharacterized protein from Rattus norvegicus (Rat).